Consider the following 858-residue polypeptide: Elongation factor 2 (858 aa).

The tr-type G domain maps to 17–362 (ANIRNMSVIA…MITIHLPSPV (346 aa)). A GTP-binding site is contributed by 26–33 (AHVDHGKS). Threonine 54 is subject to Phosphothreonine. Threonine 57 carries the phosphothreonine; by EEF2K modification. A Phosphothreonine modification is found at threonine 59. Lysine 152 bears the N6-succinyllysine mark. GTP-binding positions include 158 to 161 (NKMD) and 216 to 218 (SGL). N6-acetyllysine is present on lysine 235. At lysine 239 the chain carries N6-acetyllysine; alternate. A Glycyl lysine isopeptide (Lys-Gly) (interchain with G-Cter in SUMO1); alternate cross-link involves residue lysine 239. Tyrosine 265 bears the Phosphotyrosine; by CSK mark. At lysine 272 the chain carries N6-acetyllysine; alternate. At lysine 272 the chain carries N6-succinyllysine; alternate. At lysine 275 the chain carries N6-acetyllysine. Lysine 322 participates in a covalent cross-link: Glycyl lysine isopeptide (Lys-Gly) (interchain with G-Cter in SUMO). The residue at position 325 (serine 325) is a Phosphoserine. Residue tyrosine 373 is modified to Phosphotyrosine; by CSK. The residue at position 435 (threonine 435) is a Phosphothreonine. An N6-acetyllysine mark is found at lysine 439 and lysine 445. At serine 502 the chain carries Phosphoserine. Residue lysine 525 is modified to N6,N6,N6-trimethyllysine; by EEF2KMT. Residue lysine 529 forms a Glycyl lysine isopeptide (Lys-Gly) (interchain with G-Cter in SUMO) linkage. Position 572 is an N6-succinyllysine (lysine 572). At serine 595 the chain carries Phosphoserine; by CDK2. N6-acetyllysine is present on lysine 619. Histidine 715 carries the diphthamide modification.

Belongs to the TRAFAC class translation factor GTPase superfamily. Classic translation factor GTPase family. EF-G/EF-2 subfamily. Binds to 80S ribosomes. Actively translating ribosomes show mutually exclusive binding of eIF5a (EIF5A or EIF5A2) and EEF2/eEF2. Interacts with SERBP1; interaction sequesters EEF2/eEF2 at the A-site of the ribosome, thereby blocking the interaction sites of the mRNA-tRNA complex, promoting ribosome stabilization and hibernation. Interacts with HABP4; interaction takes place at the A-site of hibernating ribosomes and promotes ribosome stabilization. Component of the mRNA surveillance SURF complex, at least composed of ERF1, ERF3 (ERF3A or ERF3B), EEF2, UPF1/RENT1, SMG1, SMG8 and SMG9. Interacts with RBPMS2. Phosphorylation by EF-2 kinase completely inactivates EF-2; it requires prior phosphorylation by CDK2 at Ser-595 during mitotic prometaphase. Phosphorylation by CSK promotes SUMOylation, proteolytic cleavage, and nuclear translocation if the C-terminal fragment. Post-translationally, diphthamide is 2-[3-carboxyamido-3-(trimethyl-ammonio)propyl]histidine. In terms of processing, ISGylated. Proteolytically processed at two sites following phosphorylation by CSK. Post-translationally, SUMOylated following phosphorylation by CSK, promotes proteolytic cleavage.

It is found in the cytoplasm. The protein localises to the nucleus. The catalysed reaction is GTP + H2O = GDP + phosphate + H(+). Functionally, catalyzes the GTP-dependent ribosomal translocation step during translation elongation. During this step, the ribosome changes from the pre-translocational (PRE) to the post-translocational (POST) state as the newly formed A-site-bound peptidyl-tRNA and P-site-bound deacylated tRNA move to the P and E sites, respectively. Catalyzes the coordinated movement of the two tRNA molecules, the mRNA and conformational changes in the ribosome. The chain is Elongation factor 2 (EEF2) from Callithrix jacchus (White-tufted-ear marmoset).